We begin with the raw amino-acid sequence, 235 residues long: Nitrile hydratase subunit beta (235 aa).

It belongs to the nitrile hydratase subunit beta family. In terms of assembly, heterodimer of an alpha and a beta chain.

It catalyses the reaction an aliphatic primary amide = an aliphatic nitrile + H2O. In terms of biological role, NHase catalyzes the hydration of various nitrile compounds to the corresponding amides. In Rhodococcus sp, this protein is Nitrile hydratase subunit beta (nthB).